The sequence spans 437 residues: Enolase (437 aa).

Gln162 serves as a coordination point for (2R)-2-phosphoglycerate. The Proton donor role is filled by Glu204. Positions 251, 297, and 324 each coordinate Mg(2+). Residues Lys349, Arg378, Ser379, and Lys400 each coordinate (2R)-2-phosphoglycerate. Lys349 (proton acceptor) is an active-site residue.

It belongs to the enolase family. Mg(2+) is required as a cofactor.

It is found in the cytoplasm. It localises to the secreted. Its subcellular location is the cell surface. It carries out the reaction (2R)-2-phosphoglycerate = phosphoenolpyruvate + H2O. Its pathway is carbohydrate degradation; glycolysis; pyruvate from D-glyceraldehyde 3-phosphate: step 4/5. Functionally, catalyzes the reversible conversion of 2-phosphoglycerate (2-PG) into phosphoenolpyruvate (PEP). It is essential for the degradation of carbohydrates via glycolysis. The sequence is that of Enolase from Chlorobium luteolum (strain DSM 273 / BCRC 81028 / 2530) (Pelodictyon luteolum).